We begin with the raw amino-acid sequence, 419 residues long: Menaquinone reductase, integral membrane subunit (419 aa).

The next 10 helical transmembrane spans lie at 23–43 (LSKF…GLYA), 61–81 (FGFG…AGAF), 98–118 (IINL…LVLV), 143–163 (VIFC…PLIL), 176–196 (AVAH…AFLS), 221–241 (FFIW…SGPV), 270–290 (IAGT…YAWA), 316–336 (LWAE…VPAL), 341–361 (VLFY…RYVM), and 383–403 (WAEW…LSLS).

The protein belongs to the NrfD family. In terms of assembly, the Qrc complex is composed of four subunits: QrcA, QrcB, QrcC and QrcD. Can form a supercomplex with the [NiFe] hydrogenase HynA1 and the tetraheme Type I cytochrome c3 TpIc(3), its physiological electron donors.

Its subcellular location is the cell inner membrane. In terms of biological role, component of the respiratory Qrc complex, that catalyzes the reduction of the menaquinone pool using electrons transferred from the reduced periplasmic cytochrome c3, and which is probably involved in sulfate respiration. Is likely essential for growth on H(2) or formate since the periplasmic hydrogenases and/or formate dehydrogenases act as primary electron donors for the Qrc complex. The QrcD subunit anchors the protein complex to the membrane and likely interacts with the quinone pool. The polypeptide is Menaquinone reductase, integral membrane subunit (Nitratidesulfovibrio vulgaris (strain ATCC 29579 / DSM 644 / CCUG 34227 / NCIMB 8303 / VKM B-1760 / Hildenborough) (Desulfovibrio vulgaris)).